The primary structure comprises 357 residues: Chorismate synthase (357 aa).

Arg48 provides a ligand contact to NADP(+). Residues 125–127 (RSS), 238–239 (NA), Gly282, 297–301 (KPTSS), and Arg323 contribute to the FMN site.

This sequence belongs to the chorismate synthase family. In terms of assembly, homotetramer. The cofactor is FMNH2.

It carries out the reaction 5-O-(1-carboxyvinyl)-3-phosphoshikimate = chorismate + phosphate. Its pathway is metabolic intermediate biosynthesis; chorismate biosynthesis; chorismate from D-erythrose 4-phosphate and phosphoenolpyruvate: step 7/7. Functionally, catalyzes the anti-1,4-elimination of the C-3 phosphate and the C-6 proR hydrogen from 5-enolpyruvylshikimate-3-phosphate (EPSP) to yield chorismate, which is the branch point compound that serves as the starting substrate for the three terminal pathways of aromatic amino acid biosynthesis. This reaction introduces a second double bond into the aromatic ring system. The protein is Chorismate synthase of Gluconacetobacter diazotrophicus (strain ATCC 49037 / DSM 5601 / CCUG 37298 / CIP 103539 / LMG 7603 / PAl5).